The following is a 345-amino-acid chain: Ubiquinone biosynthesis O-methyltransferase, mitochondrial (345 aa).

A mitochondrion-targeting transit peptide spans 1–86; the sequence is MWRGGRLSSR…TYRSSWKKLY (86 aa). Arg124 provides a ligand contact to S-adenosyl-L-methionine. N6-acetyllysine occurs at positions 143 and 149. S-adenosyl-L-methionine contacts are provided by Gly154 and Asp175. Lys196 bears the N6-acetyllysine mark. Residue Ser222 participates in S-adenosyl-L-methionine binding. Residues Glu223, Glu226, and His227 each coordinate Mg(2+).

Belongs to the class I-like SAM-binding methyltransferase superfamily. UbiG/COQ3 family. As to quaternary structure, component of a multi-subunit COQ enzyme complex, composed of at least COQ3, COQ4, COQ5, COQ6, COQ7 and COQ9. Requires Mg(2+) as cofactor.

It is found in the mitochondrion inner membrane. The enzyme catalyses 3,4-dihydroxy-5-(all-trans-decaprenyl)benzoate + S-adenosyl-L-methionine = 4-hydroxy-3-methoxy-5-(all-trans-decaprenyl)benzoate + S-adenosyl-L-homocysteine + H(+). The catalysed reaction is a 3-demethylubiquinone + S-adenosyl-L-methionine = a ubiquinone + S-adenosyl-L-homocysteine. It catalyses the reaction 3-demethylubiquinol-10 + S-adenosyl-L-methionine = ubiquinol-10 + S-adenosyl-L-homocysteine + H(+). Its pathway is cofactor biosynthesis; ubiquinone biosynthesis. Its function is as follows. O-methyltransferase required for two non-consecutive steps during ubiquinone biosynthesis. Catalyzes the 2 O-methylation of 3,4-dihydroxy-5-(all-trans-decaprenyl)benzoic acid into 4-hydroxy-3-methoxy-5-(all-trans-decaprenyl)benzoic acid. Also catalyzes the last step of ubiquinone biosynthesis by mediating methylation of 3-demethylubiquinone into ubiquinone. Also able to mediate the methylation of 3-demethylubiquinol-10 into ubiquinol-10. This is Ubiquinone biosynthesis O-methyltransferase, mitochondrial from Rattus norvegicus (Rat).